Consider the following 38-residue polypeptide: Photosystem II reaction center protein L (38 aa).

The helical transmembrane segment at 17-37 threads the bilayer; the sequence is SLYWGLLLIFVLAVLFSNYFF.

It belongs to the PsbL family. As to quaternary structure, PSII is composed of 1 copy each of membrane proteins PsbA, PsbB, PsbC, PsbD, PsbE, PsbF, PsbH, PsbI, PsbJ, PsbK, PsbL, PsbM, PsbT, PsbX, PsbY, PsbZ, Psb30/Ycf12, at least 3 peripheral proteins of the oxygen-evolving complex and a large number of cofactors. It forms dimeric complexes.

The protein resides in the plastid. Its subcellular location is the chloroplast thylakoid membrane. In terms of biological role, one of the components of the core complex of photosystem II (PSII). PSII is a light-driven water:plastoquinone oxidoreductase that uses light energy to abstract electrons from H(2)O, generating O(2) and a proton gradient subsequently used for ATP formation. It consists of a core antenna complex that captures photons, and an electron transfer chain that converts photonic excitation into a charge separation. This subunit is found at the monomer-monomer interface and is required for correct PSII assembly and/or dimerization. The polypeptide is Photosystem II reaction center protein L (Gnetum gnemon (Spanish joint-fir)).